The chain runs to 374 residues: Ribosomal RNA large subunit methyltransferase G (374 aa).

Belongs to the methyltransferase superfamily. RlmG family.

The protein resides in the cytoplasm. The catalysed reaction is guanosine(1835) in 23S rRNA + S-adenosyl-L-methionine = N(2)-methylguanosine(1835) in 23S rRNA + S-adenosyl-L-homocysteine + H(+). Specifically methylates the guanine in position 1835 (m2G1835) of 23S rRNA. In Pseudomonas savastanoi pv. phaseolicola (strain 1448A / Race 6) (Pseudomonas syringae pv. phaseolicola (strain 1448A / Race 6)), this protein is Ribosomal RNA large subunit methyltransferase G.